The primary structure comprises 184 residues: Photosystem I assembly protein Ycf4 (184 aa).

The next 2 membrane-spanning stretches (helical) occupy residues isoleucine 19 to glycine 39 and isoleucine 57 to serine 77.

Belongs to the Ycf4 family.

It localises to the plastid. It is found in the chloroplast thylakoid membrane. Seems to be required for the assembly of the photosystem I complex. This Drimys granadensis protein is Photosystem I assembly protein Ycf4.